The following is an 855-amino-acid chain: Beta-mannosidase B (855 aa).

A glycan (N-linked (GlcNAc...) asparagine) is linked at asparagine 98. The active-site Proton donor is glutamate 430. Residues asparagine 693 and asparagine 730 are each glycosylated (N-linked (GlcNAc...) asparagine).

This sequence belongs to the glycosyl hydrolase 2 family. Beta-mannosidase B subfamily. Homodimer.

It localises to the secreted. The catalysed reaction is Hydrolysis of terminal, non-reducing beta-D-mannose residues in beta-D-mannosides.. Its pathway is glycan metabolism; N-glycan degradation. Exoglycosidase that cleaves the single beta-linked mannose residue from the non-reducing end of beta-mannosidic oligosaccharides of various complexity and length. Prefers mannobiose over mannotriose. Is also severely restricted by galactosyl substitutions at the +1 subsite. Has no activity against polymeric mannan. The protein is Beta-mannosidase B (man9) of Thermothelomyces thermophilus (Myceliophthora thermophila).